Here is a 125-residue protein sequence, read N- to C-terminus: Glycine cleavage system H protein (125 aa).

In terms of domain architecture, Lipoyl-binding spans 22 to 104 (SYVIGITDFA…YDTGWILKLE (83 aa)). Position 63 is an N6-lipoyllysine (lysine 63).

The protein belongs to the GcvH family. The glycine cleavage system is composed of four proteins: P, T, L and H. The cofactor is (R)-lipoate.

In terms of biological role, the glycine cleavage system catalyzes the degradation of glycine. The H protein shuttles the methylamine group of glycine from the P protein to the T protein. Is also involved in protein lipoylation via its role as an octanoyl/lipoyl carrier protein intermediate. The sequence is that of Glycine cleavage system H protein from Listeria monocytogenes serotype 4b (strain CLIP80459).